Consider the following 137-residue polypeptide: Nucleoside diphosphate kinase (137 aa).

ATP contacts are provided by Lys-10, Phe-59, Arg-87, Thr-93, Arg-104, and Asn-114. The active-site Pros-phosphohistidine intermediate is His-117.

This sequence belongs to the NDK family. Homotetramer. It depends on Mg(2+) as a cofactor.

The protein resides in the cytoplasm. It catalyses the reaction a 2'-deoxyribonucleoside 5'-diphosphate + ATP = a 2'-deoxyribonucleoside 5'-triphosphate + ADP. The enzyme catalyses a ribonucleoside 5'-diphosphate + ATP = a ribonucleoside 5'-triphosphate + ADP. Functionally, major role in the synthesis of nucleoside triphosphates other than ATP. The ATP gamma phosphate is transferred to the NDP beta phosphate via a ping-pong mechanism, using a phosphorylated active-site intermediate. The chain is Nucleoside diphosphate kinase from Streptomyces avermitilis (strain ATCC 31267 / DSM 46492 / JCM 5070 / NBRC 14893 / NCIMB 12804 / NRRL 8165 / MA-4680).